A 133-amino-acid chain; its full sequence is Fluoride-specific ion channel FluC 4 (133 aa).

The next 3 helical transmembrane spans lie at 7 to 27 (ILVL…SGYV), 37 to 57 (WGTF…AGLG), and 60 to 80 (LGGI…LLGG). Positions 79 and 82 each coordinate Na(+). Residues 107 to 127 (IVASALLCVLAVAAGYGGIMW) traverse the membrane as a helical segment.

Belongs to the fluoride channel Fluc/FEX (TC 1.A.43) family.

It is found in the cell inner membrane. It catalyses the reaction fluoride(in) = fluoride(out). Na(+) is not transported, but it plays an essential structural role and its presence is essential for fluoride channel function. In terms of biological role, fluoride-specific ion channel. Important for reducing fluoride concentration in the cell, thus reducing its toxicity. The chain is Fluoride-specific ion channel FluC 4 from Brucella abortus biovar 1 (strain 9-941).